A 338-amino-acid chain; its full sequence is Probable tRNA pseudouridine synthase B (338 aa).

Asp80 acts as the Nucleophile in catalysis. Residues 247–322 (LPRIEIRDTA…IMVDTKRVLM (76 aa)) form the PUA domain.

Belongs to the pseudouridine synthase TruB family. Type 2 subfamily.

It catalyses the reaction uridine(55) in tRNA = pseudouridine(55) in tRNA. In terms of biological role, could be responsible for synthesis of pseudouridine from uracil-55 in the psi GC loop of transfer RNAs. The polypeptide is Probable tRNA pseudouridine synthase B (Methanopyrus kandleri (strain AV19 / DSM 6324 / JCM 9639 / NBRC 100938)).